Here is a 127-residue protein sequence, read N- to C-terminus: Aspartate 1-decarboxylase (127 aa).

Serine 25 (schiff-base intermediate with substrate; via pyruvic acid) is an active-site residue. Serine 25 bears the Pyruvic acid (Ser) mark. Threonine 57 serves as a coordination point for substrate. The active-site Proton donor is the tyrosine 58. 73–75 (GAA) is a substrate binding site.

This sequence belongs to the PanD family. In terms of assembly, heterooctamer of four alpha and four beta subunits. Pyruvate is required as a cofactor. In terms of processing, is synthesized initially as an inactive proenzyme, which is activated by self-cleavage at a specific serine bond to produce a beta-subunit with a hydroxyl group at its C-terminus and an alpha-subunit with a pyruvoyl group at its N-terminus.

The protein localises to the cytoplasm. The catalysed reaction is L-aspartate + H(+) = beta-alanine + CO2. It functions in the pathway cofactor biosynthesis; (R)-pantothenate biosynthesis; beta-alanine from L-aspartate: step 1/1. In terms of biological role, catalyzes the pyruvoyl-dependent decarboxylation of aspartate to produce beta-alanine. The polypeptide is Aspartate 1-decarboxylase (Staphylococcus aureus (strain MSSA476)).